Reading from the N-terminus, the 339-residue chain is Dihydroorotate dehydrogenase (quinone) (339 aa).

Residues 62–66 (AGMDK) and threonine 86 each bind FMN. Residue lysine 66 coordinates substrate. Residue 111–115 (NRMGF) participates in substrate binding. Asparagine 139 and asparagine 172 together coordinate FMN. Residue asparagine 172 coordinates substrate. Serine 175 serves as the catalytic Nucleophile. Asparagine 177 lines the substrate pocket. Positions 217 and 245 each coordinate FMN. 246–247 (NT) is a substrate binding site. FMN is bound by residues glycine 268, glycine 297, and 318-319 (YS).

This sequence belongs to the dihydroorotate dehydrogenase family. Type 2 subfamily. Monomer. It depends on FMN as a cofactor.

It localises to the cell membrane. It carries out the reaction (S)-dihydroorotate + a quinone = orotate + a quinol. Its pathway is pyrimidine metabolism; UMP biosynthesis via de novo pathway; orotate from (S)-dihydroorotate (quinone route): step 1/1. In terms of biological role, catalyzes the conversion of dihydroorotate to orotate with quinone as electron acceptor. This Shewanella putrefaciens (strain CN-32 / ATCC BAA-453) protein is Dihydroorotate dehydrogenase (quinone).